The chain runs to 549 residues: MTLASIRRGYHVIKTLLQYGLDDVLPPKMTPWYFKLARNSLFWIRNKHKGKSGGERLKLAMQELGPVYIKLGQMLSTRRDLLSDEWANELAMLQDKVPPFDGALARQAIEAELKAPIESYFDDFDETPLASASISQVHTATLKSNGKAVVLKVLRPNVETKIQADLLLMSQTAKVIDYLLGEGNRLRPSEVIEDYRVTILGELNLKLEALNAIKLRNNFLDSDALYIPYVYEEFCYPRLMVMERIYGIPVSDIAALKAQGTNFKLLAERGVELFFTQVFRDNFFHADMHPGNIFISREHPENPYYIGLDCGIMGTLSEVDKRYLAENFLAFFNRDYHRIAQLYIESGWVSEKTDLQAFEQAIKVVCEPMFNKPLDEISFGHVLLELFRTARHFDIVVQPQLVLLEKTLLYIEGLGRQLYPQLDLWQTAKPFLEQWMAEQVGPKAMFKKVSTKLPYWSDKLPEFPELIYDNLKLGRKLLSSQQQMLDKYLKYQQQAHKSNYLLITSAILLICGTLLFNQDATLWSPYVCLISGAVLWIIGWRSRPKNRKF.

The Protein kinase domain occupies 123–501; sequence DFDETPLASA…QQQAHKSNYL (379 aa). ATP is bound by residues 129–137 and Lys-152; that span reads LASASISQV. Asp-287 serves as the catalytic Proton acceptor. The next 2 helical transmembrane spans lie at 498 to 518 and 520 to 540; these read SNYL…LFNQ and ATLW…IIGW.

Belongs to the ABC1 family. UbiB subfamily.

It is found in the cell inner membrane. It functions in the pathway cofactor biosynthesis; ubiquinone biosynthesis [regulation]. Its function is as follows. Is probably a protein kinase regulator of UbiI activity which is involved in aerobic coenzyme Q (ubiquinone) biosynthesis. The protein is Probable protein kinase UbiB of Shewanella sp. (strain ANA-3).